A 132-amino-acid chain; its full sequence is MRRNETPEGRSVRLLRVGEQVRHALSDILMRGEVHDDVLASHMVSVTEVRMSPDLRHATVFVKPLLGGDEDIVIKALRTNTAFLQSEVARRVNTKYAAKLKFLADESFDEGSHIDRLLRDPSIARDLDQDAD.

This sequence belongs to the RbfA family. As to quaternary structure, monomer. Binds 30S ribosomal subunits, but not 50S ribosomal subunits or 70S ribosomes.

Its subcellular location is the cytoplasm. Functionally, one of several proteins that assist in the late maturation steps of the functional core of the 30S ribosomal subunit. Associates with free 30S ribosomal subunits (but not with 30S subunits that are part of 70S ribosomes or polysomes). Required for efficient processing of 16S rRNA. May interact with the 5'-terminal helix region of 16S rRNA. This is Ribosome-binding factor A from Rhizorhabdus wittichii (strain DSM 6014 / CCUG 31198 / JCM 15750 / NBRC 105917 / EY 4224 / RW1) (Sphingomonas wittichii).